Reading from the N-terminus, the 242-residue chain is Dehydration-responsive element-binding protein 1J (242 aa).

Low complexity predominate over residues 20–29 (SSATTAATAT). A disordered region spans residues 20 to 44 (SSATTAATATGPASPKRPAGRTKFQ). The AP2/ERF DNA-binding region spans 50–109 (VFRGVRRRGRAGRWVCEVRVPGSRGDRLWVGTFDTAEEAARAHDAAMLALCGASASLNFA). Residues 143 to 184 (FQRRGSTAATATATSGDAASTAPPSSSPVLSPNDDNASSAST) form a disordered region. A compositionally biased stretch (low complexity) spans 148 to 184 (STAATATATSGDAASTAPPSSSPVLSPNDDNASSAST).

This sequence belongs to the AP2/ERF transcription factor family. ERF subfamily.

It is found in the nucleus. In terms of biological role, transcriptional activator that binds specifically to the DNA sequence 5'-[AG]CCGAC-3'. Binding to the C-repeat/DRE element mediates high salinity- and dehydration-inducible transcription. The polypeptide is Dehydration-responsive element-binding protein 1J (DREB1J) (Oryza sativa subsp. japonica (Rice)).